The following is a 595-amino-acid chain: Protein halfway (595 aa).

Disordered stretches follow at residues 1–42 (MLLT…ADDE) and 64–98 (TGAA…PLLP). N-linked (GlcNAc...) asparagine glycans are attached at residues N250 and N255. Residues 347–402 (ESTKRCMTKCPVIPNYGSCKCRFESIMIIQDDQSKPKCHVDCSNLGLVELPPRLPD) enclose the LRRNT domain. 3 LRR repeats span residues 403-424 (NTFV…FQTN), 429-450 (NINR…EGTK), and 454-475 (NFQR…FLNN). Positions 489-538 (NKLQCDCNSAKTLQNWLKERSTDIPDYMEIRCRNIPQSVIELQEAKLCQS) constitute an LRRCT domain.

In terms of biological role, has a role in the ecdysone induced cascade; probably indirect control of 'late' ecdysone genes. The chain is Protein halfway (hfw) from Drosophila pseudoobscura pseudoobscura (Fruit fly).